We begin with the raw amino-acid sequence, 553 residues long: Mucolipin-3 (553 aa).

Residues 1-62 lie on the Cytoplasmic side of the membrane; that stretch reads MADPEVVVSS…FWARGRKPWK (62 aa). Positions 52–62 are interaction with phosphoinositides; that stretch reads KFWARGRKPWK. Residues 63-83 form a helical membrane-spanning segment; the sequence is LAIQILKIAMVTIQLVLFGLS. Over 84–283 the chain is Extracellular; it reads NQMVVAFKEE…VSGSIQKNTH (200 aa). The interval 104–118 is extracellular/lumenal pore loop; the sequence is KGYMDRMDDTYAVYT. N-linked (GlcNAc...) asparagine glycans are attached at residues Asn138, Asn172, and Asn205. Residues Cys159 and Cys185 are joined by a disulfide bond. Cysteines 238 and 269 form a disulfide. The helical transmembrane segment at 284 to 304 threads the bilayer; that stretch reads YMMIFDAFVILTCLVSLILCI. Over 305 to 341 the chain is Cytoplasmic; sequence RSVIRGLQLQQEFVNFFLLHYKKEVSVSDQMEFVNGW. A helical membrane pass occupies residues 342 to 362; that stretch reads YIMIIISDILTIIGSILKMEI. Topologically, residues 363–371 are extracellular; it reads QAKSLTSYD. Residues 372-392 traverse the membrane as a helical segment; the sequence is VCSILLGTSTMLVWLGVIRYL. Over 393–414 the chain is Cytoplasmic; the sequence is GFFAKYNLLILTLQAALPNVIR. Residues 415–435 form a helical membrane-spanning segment; sequence FCCCAAMIYLGYCFCGWIVLG. Residues 436-443 are Extracellular-facing; that stretch reads PYHDKFRS. Positions 444–464 form an intramembrane region, pore-forming; the sequence is LNMVSECLFSLINGDDMFATF. The Selectivity filter motif lies at 456 to 459; it reads NGDD. Over 465–475 the chain is Extracellular; sequence AKMQQKSYLVW. Residues 476–497 traverse the membrane as a helical segment; the sequence is LFSRIYLYSFISLFIYMILSLF. Residues 498 to 553 lie on the Cytoplasmic side of the membrane; sequence IALITDTYETIKQYQQDGFPETELRTFISECKDLPNSGKYRLEDDPPVSLFCCCKK.

It belongs to the transient receptor (TC 1.A.4) family. Polycystin subfamily. MCOLN3 sub-subfamily. Homotetramer. Can heterooligomerize with MCOLN1; heteromeric assemblies have different channel properties as compared to the respective homooligomers and may be tissue-specific. May heterooligomerize with TRPV5 to form a functional distinct ion channel. Interacts with GABARAPL2. In terms of processing, N-glycosylated.

The protein resides in the cell membrane. It is found in the early endosome membrane. It localises to the late endosome membrane. The protein localises to the lysosome membrane. Its subcellular location is the cytoplasmic vesicle. The protein resides in the autophagosome membrane. The catalysed reaction is Ca(2+)(in) = Ca(2+)(out). The enzyme catalyses K(+)(in) = K(+)(out). It catalyses the reaction Na(+)(in) = Na(+)(out). Channel activity is activated by PtdIns(3,5)P2 (phosphatidylinositol 3,5-bisphosphate). Inhibited by lumenal H(+) and Na(+). The channel pore shows dynamic behavior and undergoes spontaneous, Ca(2+)-dependent modulation when conducting Ca(2+). Functionally, nonselective cation channel probably playing a role in the regulation of membrane trafficking events. Acts as a Ca(2+)-permeable cation channel with inwardly rectifying activity. Mediates release of Ca(2+) from endosomes to the cytoplasm, contributes to endosomal acidification and is involved in the regulation of membrane trafficking and fusion in the endosomal pathway. Also permeable to Mg(2+), Na(+) and K(+). Does not seem to act as mechanosensory transduction channel in inner ear sensory hair cells. Proposed to play a critical role at the cochlear stereocilia ankle-link region during hair-bundle growth. Involved in the regulation of autophagy. Through association with GABARAPL2 may be involved in autophagosome formation possibly providing Ca(2+) for the fusion process. Through a possible and probably tissue-specific heteromerization with MCOLN1 may be at least in part involved in many lysosome-dependent cellular events. Possible heteromeric ion channel assemblies with TRPV5 show pharmacological similarity with TRPML3. The chain is Mucolipin-3 (MCOLN3) from Homo sapiens (Human).